The sequence spans 982 residues: E3 ubiquitin-protein ligase CBL-B (982 aa).

Residues 1 to 14 (MASSSSSSSSTNSS) are compositionally biased toward low complexity. A disordered region spans residues 1–25 (MASSSSSSSSTNSSAVTGRLPGARS). Residues 46–178 (PPKQAAADRR…KAIFPSGQFQ (133 aa)) form a 4H region. One can recognise a Cbl-PTB domain in the interval 46–354 (PPKQAAADRR…GRSYNPDLTD (309 aa)). Positions 179–251 (GDNFRITKAD…FEFDIFTRLF (73 aa)) are EF-hand-like. Residues aspartate 232, threonine 234, asparagine 236, tyrosine 238, and glutamate 243 each coordinate Ca(2+). Residues 252–354 (QPWTSILRNW…GRSYNPDLTD (103 aa)) form an SH2-like region. Arginine 297 lines the 4-O-phospho-L-tyrosine pocket. The tract at residues 355–383 (LCEPTPHDHIKVTQEQYELYCEMGSTFQL) is linker. The segment at 384–423 (CKICAENDKDVKIEPCGHLMCTSCLTSWQESDGQGCPFCR) adopts an RING-type zinc-finger fold. 3 disordered regions span residues 480–582 (MNER…RTCR), 709–728 (VRNS…SHPV), and 766–911 (LKQP…PVPR). Positions 483-497 (RQNSPVTSPGSSPLS) are enriched in polar residues. A compositionally biased stretch (pro residues) spans 554–576 (LPAPPPPLREPPPPPERPPPIPP). Over residues 825–834 (PSQPPPPPPA) the composition is skewed to pro residues. One can recognise a UBA domain in the interval 927-970 (SLAENVDAKIAKLMGEGFPFEEVKRALEIAQNNVDVARSILREF).

Interacts with several SH3 domain-containing proteins and with poly-ubiquitinated proteins.

The protein localises to the cytoplasm. The catalysed reaction is S-ubiquitinyl-[E2 ubiquitin-conjugating enzyme]-L-cysteine + [acceptor protein]-L-lysine = [E2 ubiquitin-conjugating enzyme]-L-cysteine + N(6)-ubiquitinyl-[acceptor protein]-L-lysine.. Its pathway is protein modification; protein ubiquitination. Functionally, E3 ubiquitin-protein ligase which accepts ubiquitin from specific E2 ubiquitin-conjugating enzymes, and transfers it to substrates, generally promoting their degradation by the proteasome. The chain is E3 ubiquitin-protein ligase CBL-B (cblb) from Xenopus tropicalis (Western clawed frog).